The chain runs to 308 residues: Probable manganese-dependent inorganic pyrophosphatase (308 aa).

Histidine 9, aspartate 13, aspartate 15, aspartate 75, histidine 97, and aspartate 149 together coordinate Mn(2+).

This sequence belongs to the PPase class C family. Requires Mn(2+) as cofactor.

It localises to the cytoplasm. It carries out the reaction diphosphate + H2O = 2 phosphate + H(+). This Listeria welshimeri serovar 6b (strain ATCC 35897 / DSM 20650 / CCUG 15529 / CIP 8149 / NCTC 11857 / SLCC 5334 / V8) protein is Probable manganese-dependent inorganic pyrophosphatase.